We begin with the raw amino-acid sequence, 78 residues long: Acyl carrier protein (78 aa).

Residues 1-76 (MALFEDIQAV…DVVKYIEDNK (76 aa)) form the Carrier domain. An O-(pantetheine 4'-phosphoryl)serine modification is found at Ser36.

The protein belongs to the acyl carrier protein (ACP) family. 4'-phosphopantetheine is transferred from CoA to a specific serine of apo-ACP by AcpS. This modification is essential for activity because fatty acids are bound in thioester linkage to the sulfhydryl of the prosthetic group.

It is found in the cytoplasm. The protein operates within lipid metabolism; fatty acid biosynthesis. Functionally, carrier of the growing fatty acid chain in fatty acid biosynthesis. This Helicobacter acinonychis (strain Sheeba) protein is Acyl carrier protein.